The chain runs to 155 residues: Ribosomal RNA large subunit methyltransferase H (155 aa).

S-adenosyl-L-methionine-binding positions include Leu-72, Gly-103, and 122 to 127 (LSDLTL).

It belongs to the RNA methyltransferase RlmH family. In terms of assembly, homodimer.

The protein localises to the cytoplasm. The enzyme catalyses pseudouridine(1915) in 23S rRNA + S-adenosyl-L-methionine = N(3)-methylpseudouridine(1915) in 23S rRNA + S-adenosyl-L-homocysteine + H(+). In terms of biological role, specifically methylates the pseudouridine at position 1915 (m3Psi1915) in 23S rRNA. This chain is Ribosomal RNA large subunit methyltransferase H, found in Polaromonas naphthalenivorans (strain CJ2).